Consider the following 82-residue polypeptide: MKASYNIQDHFLNQLRKEMVPTTVFLVSGFQIRGVIKSFDNFTVIVESEGRQQLIYKHAISTFSPARNVTLYEPDAVEVTEG.

The region spanning 9-69 (DHFLNQLRKE…ISTFSPARNV (61 aa)) is the Sm domain.

It belongs to the Hfq family. Homohexamer.

RNA chaperone that binds small regulatory RNA (sRNAs) and mRNAs to facilitate mRNA translational regulation in response to envelope stress, environmental stress and changes in metabolite concentrations. Also binds with high specificity to tRNAs. This Exiguobacterium sp. (strain ATCC BAA-1283 / AT1b) protein is RNA-binding protein Hfq.